A 1194-amino-acid polypeptide reads, in one-letter code: Peroxisomal ATPase PEX1 (1194 aa).

The tract at residues 220–255 (KTRQRRMSHQGKSVKAKSLASTRHGKRRDDGSGPSG) is disordered. A compositionally biased stretch (basic residues) spans 221-234 (TRQRRMSHQGKSVK). Residues 538–730 (RSASVLLTGA…GPEPTLKIEK (193 aa)) are AAA-cassette D1. Residues 546-553 (GARGSGKT) and 849-856 (GYPGCGKT) contribute to the ATP site. An AAA-cassette D2 region spans residues 844–1028 (GLLLYGYPGC…LYNAHLEAIH (185 aa)). 3 disordered regions span residues 1062 to 1084 (YISFSMGNKDSTGEPSTQPLTNG), 1116 to 1139 (QVQQQQSQTNQAQEEEKGDDEPVI), and 1174 to 1194 (RSGEMPSGQSSTEIGGRSSLM). The span at 1066–1084 (SMGNKDSTGEPSTQPLTNG) shows a compositional bias: polar residues. Over residues 1116 to 1127 (QVQQQQSQTNQA) the composition is skewed to low complexity.

The protein belongs to the AAA ATPase family. In terms of assembly, interacts with PEX6; forming the PEX1-PEX6 AAA ATPase complex, which is composed of a heterohexamer formed by a trimer of PEX1-PEX6 dimers.

It localises to the cytoplasm. The protein localises to the cytosol. The protein resides in the peroxisome membrane. It catalyses the reaction ATP + H2O = ADP + phosphate + H(+). In terms of biological role, component of the PEX1-PEX6 AAA ATPase complex, a protein dislocase complex that mediates the ATP-dependent extraction of the PEX5 receptor from peroxisomal membranes, an essential step for PEX5 recycling. Specifically recognizes PEX5 monoubiquitinated at 'Cys-6', and pulls it out of the peroxisome lumen through the PEX2-PEX10-PEX12 retrotranslocation channel. Extraction by the PEX1-PEX6 AAA ATPase complex is accompanied by unfolding of the TPR repeats and release of bound cargo from PEX5. Regulates autophagy and biogenesis of peroxisomes and Woronin bodies. Plays important roles in mycelial growth and development and stress response. Is also essential for conidiation and fatty acid utilization. Required for nematode predation via trap formation. In Arthrobotrys oligospora (strain ATCC 24927 / CBS 115.81 / DSM 1491) (Nematode-trapping fungus), this protein is Peroxisomal ATPase PEX1.